Consider the following 286-residue polypeptide: Polyamine aminopropyltransferase (286 aa).

One can recognise a PABS domain in the interval 9-242; the sequence is NGWIDEHHQG…GWWSWTFAAI (234 aa). An S-methyl-5'-thioadenosine-binding site is contributed by Gln36. 2 residues coordinate spermidine: His67 and Asp91. S-methyl-5'-thioadenosine-binding positions include Glu111 and 143 to 144; that span reads NG. Catalysis depends on Asp162, which acts as the Proton acceptor. Position 169 (Pro169) interacts with S-methyl-5'-thioadenosine.

This sequence belongs to the spermidine/spermine synthase family. In terms of assembly, homodimer or homotetramer.

The protein resides in the cytoplasm. The enzyme catalyses S-adenosyl 3-(methylsulfanyl)propylamine + putrescine = S-methyl-5'-thioadenosine + spermidine + H(+). The protein operates within amine and polyamine biosynthesis; spermidine biosynthesis; spermidine from putrescine: step 1/1. Functionally, catalyzes the irreversible transfer of a propylamine group from the amino donor S-adenosylmethioninamine (decarboxy-AdoMet) to putrescine (1,4-diaminobutane) to yield spermidine. The polypeptide is Polyamine aminopropyltransferase (Prochlorococcus marinus (strain MIT 9313)).